A 327-amino-acid polypeptide reads, in one-letter code: Deoxynucleotidyltransferase terminal-interacting protein 1 (327 aa).

Residues 1-11 (MGATGDTGGPR) are compositionally biased toward gly residues. Disordered stretches follow at residues 1 to 34 (MGAT…PVLT) and 146 to 172 (KRGR…LPGH). The interval 55–146 (MTTSFTDPAI…RLAHELPGIK (92 aa)) is important for dimerization. Residues 146-161 (KRGRQAEEESHREAPF) show a composition bias toward basic and acidic residues. Residues 157 to 171 (REAPFPKRGKVGLPG) constitute a DNA-binding region (a.T hook). Residues 162–168 (PKRGKVG) carry the Nuclear localization signal motif. The important for DNA and nucleosome binding stretch occupies residues 195 to 314 (REGPKWDPAR…MRKYMETLRT (120 aa)). The H-T-H motif DNA-binding region spans 214 to 235 (GSRANKALGMGGTRGRIYIKHP).

Monomer and homodimer. A minor proportion may form homotrimers. Interacts with ZNF541. Interacts with the terminal deoxynucleotidyltransferase DNTT. Interacts with TRERF1. Identified in a histone deacetylase complex that contains DNTTIP1, HDAC1 and MIDEAS; this complex assembles into a tetramer that contains four copies of each protein chain. Component of a histone deacetylase complex containing DNTTIP1, ZNF541, HDAC1 and HDAC2. Identified in a complex with KCTD19, HDAC1, HDAC2 and ZNF541. In terms of tissue distribution, expressed in thymus, bone marrow and spleen.

The protein localises to the nucleus. In terms of biological role, increases DNTT terminal deoxynucleotidyltransferase activity (in vitro). Also acts as a transcriptional regulator, binding to the consensus sequence 5'-GNTGCATG-3' following an AT-tract. Associates with RAB20 promoter and positively regulates its transcription. Binds DNA and nucleosomes; may recruit HDAC1 complexes to nucleosomes or naked DNA. This is Deoxynucleotidyltransferase terminal-interacting protein 1 (Dnttip1) from Rattus norvegicus (Rat).